Consider the following 3080-residue polypeptide: Protein PIEZO homolog (3080 aa).

Transmembrane regions (helical) follow at residues 28 to 48, 57 to 77, 86 to 106, 113 to 133, 204 to 224, and 232 to 252; these read YIYFIFFLLSILCLPHKSLIL, PIITLVLSMFSLILQLLVNVV, LSVNILTAFGFYKYNSFWIVF, VIVFVISLFTIILWFKNLVYP, YPSIINVIYFVFTILIILLLA, and VMLKCYPILLITSLCHLLFVY. The N-linked (GlcNAc...) asparagine glycan is linked to asparagine 276. The chain crosses the membrane as a helical span at residues 285–305; that stretch reads WPLVIGYITVLLLYISTCILF. 2 N-linked (GlcNAc...) asparagine glycosylation sites follow: asparagine 312 and asparagine 339. 2 consecutive transmembrane segments (helical) span residues 362–382 and 396–416; these read ILVVCFFLTASVASAILLASG and VIYIILLYFLVFISAQYIFNI. N-linked (GlcNAc...) asparagine glycosylation is present at asparagine 434. A helical transmembrane segment spans residues 438-458; the sequence is WLYIGVQIVVSLTLSLYCFYS. The interval 469 to 548 is disordered; it reads KKDQQSQQSQ…GGGIIRPRKP (80 aa). The segment covering 473 to 505 has biased composition (low complexity); that stretch reads QSQQSQPQPQQQQQQQQSSQNNQIQQSPLQYQQ. Residues 512 to 532 are compositionally biased toward polar residues; sequence ISNKSLPSSPMSTKSTTVHIQ. N-linked (GlcNAc...) asparagine glycosylation is found at asparagine 514, asparagine 567, and asparagine 606. The next 3 membrane-spanning stretches (helical) occupy residues 672–692, 700–720, and 740–760; these read GLTSINLLNAGYMLFFIVFVI, FWMCLIIYAQMVLLTLYIWQL, and YGSPLWVGLIWHIIIITFSII. N-linked (GlcNAc...) asparagine glycosylation is present at asparagine 795. 3 helical membrane-spanning segments follow: residues 827-847, 849-869, and 872-892; these read FCYLVIVIVSIFTKISLINIV, MATVFLCLLIHHISANGSIHI, and FWIIIILSQGVVLVARYIMQF. Residue asparagine 918 is glycosylated (N-linked (GlcNAc...) asparagine). A helical transmembrane segment spans residues 928–948; sequence LFGCSSILVVCVFQLTVFFSI. The N-linked (GlcNAc...) asparagine glycan is linked to asparagine 992. The next 2 membrane-spanning stretches (helical) occupy residues 1036-1056 and 1067-1087; these read FAISIAEYNFFNFIYLIMIVI and IGSFLLFYSQLWVLTQLAALL. N-linked (GlcNAc...) asparagine glycosylation is present at asparagine 1109. The segment at 1158–1185 is disordered; sequence QQQRKLEEHEEEYEEEEDQFGNKKNNDK. Residues 1166-1176 are compositionally biased toward acidic residues; it reads HEEEYEEEEDQ. Residues asparagine 1191, asparagine 1240, and asparagine 1251 are each glycosylated (N-linked (GlcNAc...) asparagine). Positions 1199–1253 are disordered; the sequence is DDGNNNNNNNNNNNNNNNNNNNNNNNNNNNNNNNNNNNNNNNQSNNENNENNNNS. A compositionally biased stretch (low complexity) spans 1202-1252; the sequence is NNNNNNNNNNNNNNNNNNNNNNNNNNNNNNNNNNNNNNNQSNNENNENNNN. 3 consecutive transmembrane segments (helical) span residues 1281–1301, 1316–1336, and 1360–1380; these read VLAFALFWRLNILGMIYLIII, IYVSALLAPTILIQYLLILVV, and LLLLSIPDRYVLVIDFLVLFF. Residues asparagine 1424 and asparagine 1440 are each glycosylated (N-linked (GlcNAc...) asparagine). The next 2 helical transmembrane spans lie at 1472–1492 and 1519–1539; these read VILIVIFLAGTAECDILSCFY and IYNWLVLMAQIIFQVAVILYF. Asparagine 1559 and asparagine 1589 each carry an N-linked (GlcNAc...) asparagine glycan. Residues 1619–1639 traverse the membrane as a helical segment; it reads IETGPLSISTISDVIIMVLLA. Residues 1704–1714 are compositionally biased toward basic residues; it reads RINRRKNRHNH. Positions 1704-1812 are disordered; that stretch reads RINRRKNRHN…NPLSNSSSTV (109 aa). The span at 1715–1742 shows a compositional bias: low complexity; the sequence is YYNNNPNNNYNNNNNNNNSNSSNSNNNN. N-linked (GlcNAc...) asparagine glycosylation is found at asparagine 1731, asparagine 1734, asparagine 1763, asparagine 1768, asparagine 1771, asparagine 1779, asparagine 1807, and asparagine 1864. The segment covering 1762–1782 has biased composition (polar residues); sequence KNTTNQNATNSTYSPFANSTM. The segment covering 1789–1812 has biased composition (low complexity); that stretch reads NNNNNNNNNNNFNNNPLSNSSSTV. Disordered regions lie at residues 1873–1899 and 1958–2032; these read LQQEQQQQQEQQQQLNPQQQQSQSSKE and SQLL…TSSS. Over residues 1958–2021 the composition is skewed to low complexity; the sequence is SQLLQQQQQQ…NNNNNNNNNN (64 aa). Asparagine 2027 is a glycosylation site (N-linked (GlcNAc...) asparagine). Helical transmembrane passes span 2078–2098 and 2112–2132; these read IANGVFYNSIISLVYLLAVFL and FWRFMIGYSSLIICLKYVFQI. Asparagine 2148 carries N-linked (GlcNAc...) asparagine glycosylation. Residues 2199-2219 traverse the membrane as a helical segment; the sequence is VFGLYIIDGHFISGAFWDLAI. The tract at residues 2277 to 2367 is disordered; that stretch reads LNNSPISLNS…NNNNNNNNNN (91 aa). Asparagine 2285 is a glycosylation site (N-linked (GlcNAc...) asparagine). Residues 2288–2367 show a composition bias toward low complexity; the sequence is NNNNNNNNNN…NNNNNNNNNN (80 aa). Helical transmembrane passes span 2427–2447 and 2457–2477; these read IIIYPFKWLFVSIIEYVWLAI and YYMPLLFTDFACLFFLVIFPQ. An N-linked (GlcNAc...) asparagine glycan is attached at asparagine 2478. The next 4 membrane-spanning stretches (helical) occupy residues 2500-2520, 2530-2550, 2553-2573, and 2671-2691; these read YIVILLAQFGVIILDRIIYLY, QIVLTVLYHVFLFFYFPDLIV, FSFGYTWPLVVFYLMKCIYLY, and FVTGVTFFIGLVILLWFPLII. Residues asparagine 2762, asparagine 2790, asparagine 2837, asparagine 2840, asparagine 2848, asparagine 2858, asparagine 2908, asparagine 2913, and asparagine 2935 are each glycosylated (N-linked (GlcNAc...) asparagine). The tract at residues 2835–2863 is disordered; sequence QSNNSNNSNNPNENSSSGSDDNNNNSNNN. Over residues 2836 to 2863 the composition is skewed to low complexity; that stretch reads SNNSNNSNNPNENSSSGSDDNNNNSNNN. A helical membrane pass occupies residues 2955 to 2975; that stretch reads ITSTLVSAGIIGLYVSVVLSV. The segment at 3054 to 3080 is disordered; sequence PTINSTLNNQNNQNNNNNNNNNHEKIN. N-linked (GlcNAc...) asparagine glycosylation is present at asparagine 3057. Low complexity predominate over residues 3061-3074; that stretch reads NNQNNQNNNNNNNN.

This sequence belongs to the PIEZO (TC 1.A.75) family.

It localises to the membrane. This is Protein PIEZO homolog from Dictyostelium discoideum (Social amoeba).